We begin with the raw amino-acid sequence, 59 residues long: U-actitoxin-Aer2b (59 aa).

Contains 5 disulfide bonds.

The protein localises to the secreted. It is found in the nematocyst. The chain is U-actitoxin-Aer2b from Anemonia erythraea (Sea anemone).